Here is a 705-residue protein sequence, read N- to C-terminus: Bifunctional arginine dihydrolase/ornithine cyclodeaminase ArgZ (705 aa).

The arginine dihydrolase stretch occupies residues Cys-10–Val-269. L-arginine-binding residues include Asn-22, Asn-71, Arg-90, Arg-139, His-168, Asp-170, Ala-258, and Cys-264. The L-ornithine site is built by Asn-22, Asn-71, Arg-90, Arg-139, and His-168. His-168 serves as the catalytic Proton donor/acceptor. Positions 258 and 264 each coordinate L-ornithine. Cys-264 serves as the catalytic Nucleophile. The tract at residues Ser-285–Leu-695 is ornithine cyclodeaminase. The NAD(+) site is built by Asn-525, Ala-526, Asp-604, Ser-636, Met-637, Leu-638, His-639, Asp-657, Asp-680, and Val-681.

It in the N-terminal section; belongs to the DDAH family. In the C-terminal section; belongs to the AgrE/ArgZ ornithine cyclodeaminase family. As to quaternary structure, homotetramer. It depends on NAD(+) as a cofactor.

The catalysed reaction is L-arginine + 2 H2O + 2 H(+) = L-ornithine + 2 NH4(+) + CO2. The enzyme catalyses L-ornithine = L-proline + NH4(+). Arginine dihydrolase activity does not require a metal cofactor. Its function is as follows. Bifunctional enzyme involved in a cyanobacterial arginine utilization pathway that enables cellular adaptation to nitrogen fluctuations. Catalyzes the hydrolysis of arginine to ornithine, with the release of ammonia and carbon dioxide. Then, probably catalyzes the conversion of ornithine to proline, with the release of ammonia. Is highly specific for arginine and cannot hydrolyze citrulline, dimethylarginine and other amino acids. The chain is Bifunctional arginine dihydrolase/ornithine cyclodeaminase ArgZ from Synechocystis sp. (strain ATCC 27184 / PCC 6803 / Kazusa).